The following is a 328-amino-acid chain: Arylacetonitrilase (328 aa).

A CN hydrolase domain is found at 5 to 278 (VRVAVTQAEP…EGIIYADLDF (274 aa)). Glu-45 acts as the Proton acceptor in catalysis. Lys-125 is an active-site residue. The Nucleophile role is filled by Cys-160.

This sequence belongs to the carbon-nitrogen hydrolase superfamily. Nitrilase family.

The catalysed reaction is a nitrile + 2 H2O = a carboxylate + NH4(+). The enzyme catalyses 4-chlorophenylacetonitrile + 2 H2O = 4-chlorophenylacetate + NH4(+). In terms of biological role, nitrilase that hydrolyzes preferentially phenylacetonitrile, (R,S)-mandelonitrile, and 3-indolylacetonitrile. The sequence is that of Arylacetonitrilase from Aspergillus niger (strain ATCC MYA-4892 / CBS 513.88 / FGSC A1513).